The following is an 84-amino-acid chain: U7-ctenitoxin-Pn1a (84 aa).

Residues 1-17 (MKLCILLVVLLITVVRA) form the signal peptide. Residues 18–38 (EEDILENEAEDISPAIKERSA) constitute a propeptide that is removed on maturation. Disulfide bonds link Cys-41–Cys-56, Cys-48–Cys-61, Cys-55–Cys-78, and Cys-63–Cys-76.

As to expression, expressed by the venom gland.

The protein resides in the secreted. Its function is as follows. Antagonist of L-type calcium channels (Cav1/CACNA1). Causes paralysis in the posterior limbs and gradual decreases in movement and aggression during 24 hours at dose levels of 5 ug per mouse. The sequence is that of U7-ctenitoxin-Pn1a from Phoneutria nigriventer (Brazilian armed spider).